Here is a 168-residue protein sequence, read N- to C-terminus: Alpha-amylase/trypsin inhibitor CM3 (168 aa).

An N-terminal signal peptide occupies residues 1-25 (MACKSSCSLLLLAAVLLSVLAAASA).

The protein belongs to the protease inhibitor I6 (cereal trypsin/alpha-amylase inhibitor) family. As to quaternary structure, subunit of the tetrameric inhibitor. Five disulfide bonds, which are essential for the inhibitor activity, are probably present. Developing endosperm.

It is found in the secreted. Alpha-amylase/trypsin inhibitor. It could be involved in insect defense mechanisms. In Triticum aestivum (Wheat), this protein is Alpha-amylase/trypsin inhibitor CM3.